The chain runs to 302 residues: Negative regulator of the PHO system (302 aa).

The Protein kinase domain occupies 6 to 296 (FKQLEKLGNG…AKQALLHPWF (291 aa)). ATP contacts are provided by residues 12–20 (LGNGTYATV) and K35. Residue D132 is the Proton acceptor of the active site.

Belongs to the protein kinase superfamily. CMGC Ser/Thr protein kinase family. CDC2/CDKX subfamily. Interacts with a number of cyclins.

The enzyme catalyses L-seryl-[protein] + ATP = O-phospho-L-seryl-[protein] + ADP + H(+). It carries out the reaction L-threonyl-[protein] + ATP = O-phospho-L-threonyl-[protein] + ADP + H(+). Functionally, when phosphate concentrations are high it phosphorylates the PHO4 transcription factor thus establishing repression. The sequence is that of Negative regulator of the PHO system (PHO85) from Candida glabrata (strain ATCC 2001 / BCRC 20586 / JCM 3761 / NBRC 0622 / NRRL Y-65 / CBS 138) (Yeast).